The sequence spans 315 residues: G-box-binding factor 1 (315 aa).

2 disordered regions span residues 1 to 56 (MGTS…GSPS) and 93 to 268 (MPMP…RDEL). The segment covering 46–56 (PFFPSPVGSPS) has biased composition (pro residues). Composition is skewed to polar residues over residues 133–164 (GSGN…QEQG) and 178–187 (ASSQSTTGEI). Residues 222–285 (ELKRQKRKQS…DKLKSENNSI (64 aa)) form the bZIP domain. Residues 224 to 243 (KRQKRKQSNRESARRSRLRK) form a basic motif region. A compositionally biased stretch (polar residues) spans 249 to 262 (QLQQRVESLSNENQ). Positions 250-285 (LQQRVESLSNENQSLRDELQRLSSECDKLKSENNSI) are leucine-zipper.

The protein belongs to the bZIP family. In terms of assembly, monomer and heterodimers with BZIP16 and BZIP68. Interacts with GIP1. Post-translationally, phosphorylated by CK2. In terms of tissue distribution, found in both light and dark grown leaves.

The protein resides in the nucleus. Binds to the G-box motif (5'-CCACGTGG-3') of the rbcS-1A gene promoter. G-box and G-box-like motifs are cis-acting elements defined in promoters of certain plant genes which are regulated by such diverse stimuli as light-induction or hormone control. Binds to the G-box motif 5'-CACGTG-3' of LHCB2.4 (At3g27690) promoter. May act as transcriptional activator in light-regulated expression of LHCB2.4. Probably binds DNA as monomer. DNA-binding activity is redox-dependent. The sequence is that of G-box-binding factor 1 (GBF1) from Arabidopsis thaliana (Mouse-ear cress).